Reading from the N-terminus, the 98-residue chain is Small ribosomal subunit protein bS6 (98 aa).

Belongs to the bacterial ribosomal protein bS6 family.

Its function is as follows. Binds together with bS18 to 16S ribosomal RNA. This chain is Small ribosomal subunit protein bS6, found in Staphylococcus epidermidis (strain ATCC 35984 / DSM 28319 / BCRC 17069 / CCUG 31568 / BM 3577 / RP62A).